A 78-amino-acid polypeptide reads, in one-letter code: COP9 signalosome complex subunit 5b (78 aa).

This sequence belongs to the peptidase M67A family. CSN5 subfamily. As to quaternary structure, component of the CSN complex, probably composed of CSN1, CSN2, CSN3, CSN4, CSN5 (CSN5A or CSN5B), CSN6 (CSN6A or CSN6B), CSN7 and CSN8. The cofactor is a divalent metal cation.

It localises to the cytoplasm. It is found in the nucleus. In terms of biological role, probable protease subunit of the COP9 signalosome complex (CSN), a complex involved in various cellular and developmental processes such as photomorphogenesis and auxin and jasmonate responses. The CSN complex is an essential regulator of the ubiquitin (Ubl) conjugation pathway by mediating the deneddylation of the cullin subunits of the SCF-type E3 ligase complexes, leading to decrease the Ubl ligase activity of SCF. In the complex, it probably acts as the catalytic center that mediates the cleavage of Nedd8 from cullins. It however has no metalloprotease activity by itself and requires the other subunits of the CSN complex. The CSN complex is involved in repression of photomorphogenesis in darkness by regulating the activity of COP1-containing Ubl ligase complexes. This Brassica oleracea (Wild cabbage) protein is COP9 signalosome complex subunit 5b (CSN5B).